A 245-amino-acid polypeptide reads, in one-letter code: Photosystem II protein PSBS2 (245 aa).

A chloroplast-targeting transit peptide spans 1–25 (MAMTLSTKAFAQRGVSARKNTVRVY). 4 helical membrane-spanning segments follow: residues 72-92 (LFVG…EILT), 108-128 (GIEV…AAVL), 185-205 (LGFA…LAQF), and 217-237 (EFGL…EGSG).

It belongs to the ELIP/psbS family.

The protein resides in the plastid. The protein localises to the chloroplast thylakoid membrane. In terms of biological role, required for non-photochemical quenching (NPQ), a mechanism that converts and dissipates the harmful excess absorbed light energy into heat and protect the photosynthetic apparatus from photo-oxidative damage. Seems involved in the activation of NPQ, possibly by promoting conformational changes required for activation of LHCSR3-dependent quenching in the antenna of photosystem II (PSII). The protein is Photosystem II protein PSBS2 of Chlamydomonas reinhardtii (Chlamydomonas smithii).